Consider the following 173-residue polypeptide: NADH-ubiquinone oxidoreductase chain 6 (173 aa).

The next 5 helical transmembrane spans lie at 1-21 (MTYFMFLLLMALVVGLVAVAS), 25-45 (PYFAALGLVVAAGVGCGVLVG), 53-73 (LVLFLIYLGGMLVVFAYSAAL), 87-107 (VLGYVLVYLLGVGLVAGFFWG), and 141-161 (GGMLVICAWVLLLTLLVVLEL).

The protein belongs to the complex I subunit 6 family.

Its subcellular location is the mitochondrion membrane. It carries out the reaction a ubiquinone + NADH + 5 H(+)(in) = a ubiquinol + NAD(+) + 4 H(+)(out). Functionally, core subunit of the mitochondrial membrane respiratory chain NADH dehydrogenase (Complex I) that is believed to belong to the minimal assembly required for catalysis. Complex I functions in the transfer of electrons from NADH to the respiratory chain. The immediate electron acceptor for the enzyme is believed to be ubiquinone. This is NADH-ubiquinone oxidoreductase chain 6 (MT-ND6) from Carassius auratus (Goldfish).